A 350-amino-acid chain; its full sequence is C5a anaphylatoxin chemotactic receptor 1 (350 aa).

The Extracellular portion of the chain corresponds to methionine 1–aspartate 37. Positions aspartate 10–aspartate 18 are required for CHIPS binding. Tyrosine 11 and tyrosine 14 each carry sulfotyrosine. The interval aspartate 21 to serine 30 is involved in C5a binding. The helical transmembrane segment at isoleucine 38–phenylalanine 64 threads the bilayer. Topologically, residues glutamate 65–threonine 69 are cytoplasmic. A helical transmembrane segment spans residues isoleucine 70 to phenylalanine 93. The Extracellular segment spans residues threonine 94–arginine 110. The cysteines at positions 109 and 188 are disulfide-linked. Residues isoleucine 111–alanine 132 form a helical membrane-spanning segment. The Cytoplasmic segment spans residues aspartate 133–alanine 153. Residues tryptophan 154–tyrosine 174 traverse the membrane as a helical segment. At arginine 175–arginine 200 the chain is on the extracellular side. A helical transmembrane segment spans residues alanine 201 to leucine 226. Residues leucine 227–lysine 242 lie on the Cytoplasmic side of the membrane. The helical transmembrane segment at valine 243–methionine 265 threads the bilayer. The Extracellular portion of the chain corresponds to serine 266–aspartate 282. The chain crosses the membrane as a helical span at residues serine 283–alanine 303. Residues glycine 304–valine 350 are Cytoplasmic-facing. Serine 314, serine 317, serine 327, serine 332, serine 334, and serine 338 each carry phosphoserine.

Belongs to the G-protein coupled receptor 1 family. In terms of assembly, homodimer. May also form higher-order oligomers. Interacts (when phosphorylated) with ARRB1 and ARRB2; the interaction is associated with internalization of C5aR. Interacts (via N-terminal domain) with S.aureus chemotaxis inhibitory protein (CHIPS); the interaction blocks the receptor and may thus inhibit the immune response. Post-translationally, sulfation plays a critical role in the association of C5aR with C5a, but no significant role in the ability of the receptor to transduce a signal and mobilize calcium in response to a small peptide agonist. Sulfation at Tyr-14 is important for CHIPS binding. In terms of processing, phosphorylated on serine residues in response to C5a binding, resulting in internalization of the receptor and short-term desensitization to C5a.

The protein resides in the cell membrane. The protein localises to the cytoplasmic vesicle. In terms of biological role, receptor for the chemotactic and inflammatory peptide anaphylatoxin C5a. The ligand interacts with at least two sites on the receptor: a high-affinity site on the extracellular N-terminus, and a second site in the transmembrane region which activates downstream signaling events. Receptor activation stimulates chemotaxis, granule enzyme release, intracellular calcium release and superoxide anion production. This Gorilla gorilla gorilla (Western lowland gorilla) protein is C5a anaphylatoxin chemotactic receptor 1 (C5AR1).